The sequence spans 931 residues: Netrin receptor UNC5C (931 aa).

An N-terminal signal peptide occupies residues 1–40 (MRKGLRATAARCGLGLGYLLQMLVLPALALLSASGTGSAA). Residues 41-380 (QDDEFFHELP…APDSDDVALY (340 aa)) lie on the Extracellular side of the membrane. Positions 62–159 (PHFLIEPEEA…AGTTKSRKAY (98 aa)) constitute an Ig-like domain. 9 disulfides stabilise this stretch: Cys83–Cys144, Cys95–Cys142, Cys188–Cys239, Cys272–Cys309, Cys276–Cys313, Cys287–Cys299, Cys328–Cys362, Cys332–Cys367, and Cys340–Cys352. The region spanning 161 to 256 (RIAYLRKTFE…KRKSTTATVI (96 aa)) is the Ig-like C2-type domain. N-linked (GlcNAc...) asparagine glycosylation is present at Asn236. 2 consecutive TSP type-1 domains span residues 260 to 314 (NGGW…TLCP) and 316 to 368 (DGRW…GLCM). The N-linked (GlcNAc...) asparagine glycan is linked to Asn361. The helical transmembrane segment at 381 to 401 (VGIVIAVTVCLAITVVVALFV) threads the bilayer. The Cytoplasmic portion of the chain corresponds to 402-931 (YRKNHRDFES…VVSLAAEGQY (530 aa)). The tract at residues 402-931 (YRKNHRDFES…VVSLAAEGQY (530 aa)) is required for netrin-mediated axon repulsion of neuronal growth cones. Ser502 is subject to Phosphoserine. Positions 530–673 (CTAFGTFNSL…LSTYALVGQS (144 aa)) constitute a ZU5 domain. Tyr568 bears the Phosphotyrosine mark. The tract at residues 694–712 (SLEYSIRVYCLDDTQDALK) is interaction with DCC. Residues 850–929 (QKLCSSLDAP…ETVVSLAAEG (80 aa)) enclose the Death domain.

This sequence belongs to the unc-5 family. In terms of assembly, interacts with DCC (via cytoplasmic domain). Interacts (tyrosine phosphorylated form) with PTPN11. Interacts (via extracellular domain) with FLRT3 (via extracellular domain). Interacts (via Ig-like C2-type domain) with DSCAM (via extracellular domain). Interacts (via death domain) with DAPK1. Interacts (via cytoplasmic domain) with TUBB3; this interaction is decreased by NTN1/Netrin-1. Post-translationally, phosphorylated on different cytoplasmic tyrosine residues. Phosphorylation of Tyr-568 leads to an interaction with PTPN11 phosphatase, suggesting that its activity is regulated by phosphorylation/dephosphorylation. Tyrosine phosphorylation is netrin-dependent. In terms of processing, proteolytically cleaved by caspases during apoptosis. The cleavage does not take place when the receptor is associated with netrin ligand. Its cleavage by caspases is required to induce apoptosis. Expressed in cortical and cerebellar neurons, including cells of the external and internal granular layer and of the Purkinje cell layer (at protein level). Mainly expressed in regions of differentiating neurons. Highly expressed in brain and lung. Expressed in the cerebellum and the neurons of the hippocampus, with enrichment in neurons of the CA3 hippocampal pyramidal layer. Weakly expressed in testis, ovary, spleen, thymus and bladder. Expressed at very low level in kidney, intestine and salivary gland.

It is found in the cell membrane. The protein resides in the cell surface. It localises to the synapse. Its subcellular location is the synaptosome. The protein localises to the cell projection. It is found in the dendrite. The protein resides in the axon. It localises to the growth cone. Its subcellular location is the lamellipodium. The protein localises to the filopodium. In terms of biological role, receptor for netrin required for axon guidance. Mediates axon repulsion of neuronal growth cones in the developing nervous system upon ligand binding. NTN1/Netrin-1 binding might cause dissociation of UNC5C from polymerized TUBB3 in microtubules and thereby lead to increased microtubule dynamics and axon repulsion. Axon repulsion in growth cones may also be caused by its association with DCC that may trigger signaling for repulsion. Might also collaborate with DSCAM in NTN1-mediated axon repulsion independently of DCC. Also involved in corticospinal tract axon guidance independently of DCC. Involved in dorsal root ganglion axon projection towards the spinal cord. It also acts as a dependence receptor required for apoptosis induction when not associated with netrin ligand. The protein is Netrin receptor UNC5C (Unc5c) of Mus musculus (Mouse).